The sequence spans 880 residues: Xylosyltransferase oxt (880 aa).

Residues 1 to 14 (MEQSVSARWLRRYR) lie on the Cytoplasmic side of the membrane. Residues 15–35 (PVLIILVLIFGIQLFLAYKSV) traverse the membrane as a helical; Signal-anchor for type II membrane protein segment. At 36-880 (DIGGGSGSGL…PKSDVDALLK (845 aa)) the chain is on the lumenal side. 4 disulfide bridges follow: Cys-87/Cys-115, Cys-131/Cys-469, Cys-488/Cys-501, and Cys-490/Cys-499. Residues Asn-135 and Asn-139 are each glycosylated (N-linked (GlcNAc...) asparagine). A WSC domain is found at 138-232 (ANVSLGCYRD…FYAMNIYETG (95 aa)). UDP-alpha-D-xylose is bound by residues Asp-287 and 316-318 (TIW). An N-linked (GlcNAc...) asparagine glycan is attached at Asn-346. 419 to 420 (DW) serves as a coordination point for UDP-alpha-D-xylose. UDP-alpha-D-xylose-binding positions include Ser-502 and 526-527 (RK). Residues Asn-700 and Asn-729 are each glycosylated (N-linked (GlcNAc...) asparagine). Cys-846 and Cys-859 are oxidised to a cystine.

It belongs to the glycosyltransferase 14 family. XylT subfamily. Ca(2+) is required as a cofactor. Requires Mn(2+) as cofactor. The cofactor is Mg(2+).

The protein resides in the endoplasmic reticulum membrane. It is found in the golgi apparatus membrane. The enzyme catalyses UDP-alpha-D-xylose + L-seryl-[protein] = 3-O-(beta-D-xylosyl)-L-seryl-[protein] + UDP + H(+). It participates in glycan metabolism; chondroitin sulfate biosynthesis. It functions in the pathway glycan metabolism; heparan sulfate biosynthesis. In terms of biological role, catalyzes the first step in biosynthesis of glycosaminoglycan. Transfers D-xylose from UDP-D-xylose to specific serine residues of the core protein. This is Xylosyltransferase oxt from Drosophila pseudoobscura pseudoobscura (Fruit fly).